Here is a 256-residue protein sequence, read N- to C-terminus: Pimeloyl-[acyl-carrier protein] methyl ester esterase (256 aa).

An AB hydrolase-1 domain is found at 15 to 242 (HLVLLHGWGL…AAHAPFISHP (228 aa)). Substrate contacts are provided by residues Trp22, 82-83 (SL), and 143-147 (FLALQ). Ser82 acts as the Nucleophile in catalysis. Catalysis depends on residues Asp207 and His235. His235 provides a ligand contact to substrate.

It belongs to the AB hydrolase superfamily. Carboxylesterase BioH family. As to quaternary structure, monomer.

Its subcellular location is the cytoplasm. It carries out the reaction 6-carboxyhexanoyl-[ACP] methyl ester + H2O = 6-carboxyhexanoyl-[ACP] + methanol + H(+). It participates in cofactor biosynthesis; biotin biosynthesis. The physiological role of BioH is to remove the methyl group introduced by BioC when the pimeloyl moiety is complete. It allows to synthesize pimeloyl-ACP via the fatty acid synthetic pathway through the hydrolysis of the ester bonds of pimeloyl-ACP esters. The chain is Pimeloyl-[acyl-carrier protein] methyl ester esterase from Escherichia coli O8 (strain IAI1).